Consider the following 874-residue polypeptide: Alanine--tRNA ligase (874 aa).

His563, His567, Cys665, and His669 together coordinate Zn(2+).

This sequence belongs to the class-II aminoacyl-tRNA synthetase family. The cofactor is Zn(2+).

It localises to the cytoplasm. It carries out the reaction tRNA(Ala) + L-alanine + ATP = L-alanyl-tRNA(Ala) + AMP + diphosphate. Catalyzes the attachment of alanine to tRNA(Ala) in a two-step reaction: alanine is first activated by ATP to form Ala-AMP and then transferred to the acceptor end of tRNA(Ala). Also edits incorrectly charged Ser-tRNA(Ala) and Gly-tRNA(Ala) via its editing domain. The sequence is that of Alanine--tRNA ligase from Histophilus somni (strain 2336) (Haemophilus somnus).